A 185-amino-acid chain; its full sequence is Protein GrpE (185 aa).

The segment at 1–37 (MSEEKQTPEQEAEVEAQEEAVQADTEEVTQDEQSAFQ) is disordered.

This sequence belongs to the GrpE family. In terms of assembly, homodimer.

Its subcellular location is the cytoplasm. Functionally, participates actively in the response to hyperosmotic and heat shock by preventing the aggregation of stress-denatured proteins, in association with DnaK and GrpE. It is the nucleotide exchange factor for DnaK and may function as a thermosensor. Unfolded proteins bind initially to DnaJ; upon interaction with the DnaJ-bound protein, DnaK hydrolyzes its bound ATP, resulting in the formation of a stable complex. GrpE releases ADP from DnaK; ATP binding to DnaK triggers the release of the substrate protein, thus completing the reaction cycle. Several rounds of ATP-dependent interactions between DnaJ, DnaK and GrpE are required for fully efficient folding. The protein is Protein GrpE of Bacillus pumilus (strain SAFR-032).